Consider the following 835-residue polypeptide: Leucine--tRNA ligase (835 aa).

Residues 36-46 carry the 'HIGH' region motif; sequence PYPSGKIHVGH. The 'KMSKS' region signature appears at 602–606; it reads KMSKS. An ATP-binding site is contributed by Lys-605.

This sequence belongs to the class-I aminoacyl-tRNA synthetase family.

The protein localises to the cytoplasm. The enzyme catalyses tRNA(Leu) + L-leucine + ATP = L-leucyl-tRNA(Leu) + AMP + diphosphate. This Rickettsia rickettsii (strain Iowa) protein is Leucine--tRNA ligase.